Reading from the N-terminus, the 630-residue chain is Polyphenol oxidase A, chloroplastic (630 aa).

Residues 1–25 (MASLCSNSSSTSLKTPFTSSTTCLS) form a disordered region. A chloroplast-targeting transit peptide spans 1–87 (MASLCSNSSS…ANAIPLAASA (87 aa)). Cystine bridges form between Cys-98/Cys-114 and Cys-113/Cys-181. Cu cation-binding residues include His-180, His-198, His-207, His-328, His-332, and His-370. A cross-link (2'-(S-cysteinyl)-histidine (Cys-His)) is located at residues 184 to 198 (CNGGYSIDGKVLQVH).

It belongs to the tyrosinase family. Cu(2+) is required as a cofactor.

The protein localises to the plastid. The protein resides in the chloroplast thylakoid lumen. It catalyses the reaction 2 catechol + O2 = 2 1,2-benzoquinone + 2 H2O. Catalyzes the oxidation of mono- and o-diphenols to o-diquinones. The polypeptide is Polyphenol oxidase A, chloroplastic (Solanum lycopersicum (Tomato)).